The following is a 753-amino-acid chain: 5-methyltetrahydropteroyltriglutamate--homocysteine methyltransferase (753 aa).

5-methyltetrahydropteroyltri-L-glutamate-binding positions include 17-20 (RELK) and lysine 117. L-homocysteine contacts are provided by residues 431-433 (IGS) and glutamate 484. L-methionine-binding positions include 431-433 (IGS) and glutamate 484. 5-methyltetrahydropteroyltri-L-glutamate is bound by residues 515 to 516 (RC) and tryptophan 561. Aspartate 599 lines the L-homocysteine pocket. Aspartate 599 provides a ligand contact to L-methionine. Residue glutamate 605 coordinates 5-methyltetrahydropteroyltri-L-glutamate. Residues histidine 641, cysteine 643, and glutamate 665 each contribute to the Zn(2+) site. Histidine 694 (proton donor) is an active-site residue. Cysteine 726 serves as a coordination point for Zn(2+).

This sequence belongs to the vitamin-B12 independent methionine synthase family. Requires Zn(2+) as cofactor.

The catalysed reaction is 5-methyltetrahydropteroyltri-L-glutamate + L-homocysteine = tetrahydropteroyltri-L-glutamate + L-methionine. The protein operates within amino-acid biosynthesis; L-methionine biosynthesis via de novo pathway; L-methionine from L-homocysteine (MetE route): step 1/1. Its function is as follows. Catalyzes the transfer of a methyl group from 5-methyltetrahydrofolate to homocysteine resulting in methionine formation. This chain is 5-methyltetrahydropteroyltriglutamate--homocysteine methyltransferase, found in Shigella flexneri.